Reading from the N-terminus, the 396-residue chain is MAKAKFERTKAHVNIGTIGHVDHGKTTLTAAISKVLYDKYPDLNEARDFATIDSAPEERQRGITINISHVEYQTEKRHYAHVDAPGHADYIKNMITGAAQMDGAILVVAATDGPMAQTREHVLLARQVGVPALLVALNKSDMVEDEELLERVEMEVRQLLSSRSFDVDEAPVIRTSALKALEGDPQWVKSVEDLMDAVDEYIPDPVRDKDKPFLMPIEDVFTITGRGTVVTGRAERGTLKINSEVEIVGIRDVQKTTVTGIEMFHKQLDEAWAGENCGLLVRGLKRDDVERGQVLVEPGSITPHTNFEANVYILSKDEGGRHTPFYSNYRAQFYFRTTDVTGVITLPEGTEMVMPGDTTEMSVELIQPIAMEEGLGFAIREGGRTVGSGRVTKITK.

A tr-type G domain is found at 10–206; that stretch reads KAHVNIGTIG…AVDEYIPDPV (197 aa). Positions 19 to 26 are G1; sequence GHVDHGKT. 19 to 26 provides a ligand contact to GTP; that stretch reads GHVDHGKT. T26 is a binding site for Mg(2+). Residues 62–66 form a G2 region; that stretch reads GITIN. The tract at residues 83–86 is G3; sequence DAPG. GTP-binding positions include 83-87 and 138-141; these read DAPGH and NKSD. The segment at 138-141 is G4; sequence NKSD. The interval 176–178 is G5; that stretch reads SAL.

This sequence belongs to the TRAFAC class translation factor GTPase superfamily. Classic translation factor GTPase family. EF-Tu/EF-1A subfamily. In terms of assembly, monomer.

It is found in the cytoplasm. It catalyses the reaction GTP + H2O = GDP + phosphate + H(+). GTP hydrolase that promotes the GTP-dependent binding of aminoacyl-tRNA to the A-site of ribosomes during protein biosynthesis. This Micrococcus luteus (Micrococcus lysodeikticus) protein is Elongation factor Tu.